A 446-amino-acid polypeptide reads, in one-letter code: Trigger factor (446 aa).

Residues 182–267 (GDKVVVDYQN…VKNIFMMKAI (86 aa)) enclose the PPIase FKBP-type domain.

This sequence belongs to the FKBP-type PPIase family. Tig subfamily.

The protein resides in the cytoplasm. It catalyses the reaction [protein]-peptidylproline (omega=180) = [protein]-peptidylproline (omega=0). Functionally, involved in protein export. Acts as a chaperone by maintaining the newly synthesized protein in an open conformation. Functions as a peptidyl-prolyl cis-trans isomerase. The sequence is that of Trigger factor from Ehrlichia ruminantium (strain Gardel).